A 57-amino-acid polypeptide reads, in one-letter code: Small ribosomal subunit protein bS21B (57 aa).

Positions 37–57 are disordered; that stretch reads RYEKPSARRKRKAEAARKRRR. Residues 43-57 are compositionally biased toward basic residues; sequence ARRKRKAEAARKRRR.

The protein belongs to the bacterial ribosomal protein bS21 family.

The protein is Small ribosomal subunit protein bS21B of Gloeobacter violaceus (strain ATCC 29082 / PCC 7421).